Consider the following 254-residue polypeptide: Translation initiation factor 2 subunit alpha (254 aa).

The S1 motif domain maps to 10–81 (GDLVVVKITE…ERKVVDLSLK (72 aa)).

It belongs to the eIF-2-alpha family. In terms of assembly, heterotrimer composed of an alpha, a beta and a gamma chain.

EIF-2 functions in the early steps of protein synthesis by forming a ternary complex with GTP and initiator tRNA. The protein is Translation initiation factor 2 subunit alpha of Thermoplasma acidophilum (strain ATCC 25905 / DSM 1728 / JCM 9062 / NBRC 15155 / AMRC-C165).